The primary structure comprises 79 residues: Acyl carrier protein (79 aa).

The 79-residue stretch at 1–79 (MTKEQILVDV…DVVSYIETQV (79 aa)) folds into the Carrier domain. Residue serine 39 is modified to O-(pantetheine 4'-phosphoryl)serine.

The protein belongs to the acyl carrier protein (ACP) family. Post-translationally, 4'-phosphopantetheine is transferred from CoA to a specific serine of apo-ACP by AcpS. This modification is essential for activity because fatty acids are bound in thioester linkage to the sulfhydryl of the prosthetic group.

It localises to the cytoplasm. It participates in lipid metabolism; fatty acid biosynthesis. Functionally, carrier of the growing fatty acid chain in fatty acid biosynthesis. The chain is Acyl carrier protein from Exiguobacterium sibiricum (strain DSM 17290 / CCUG 55495 / CIP 109462 / JCM 13490 / 255-15).